Reading from the N-terminus, the 502-residue chain is Glycogen synthase 1 (502 aa).

K18 is a binding site for ADP-alpha-D-glucose.

It belongs to the glycosyltransferase 1 family. Bacterial/plant glycogen synthase subfamily.

The enzyme catalyses [(1-&gt;4)-alpha-D-glucosyl](n) + ADP-alpha-D-glucose = [(1-&gt;4)-alpha-D-glucosyl](n+1) + ADP + H(+). It functions in the pathway glycan biosynthesis; glycogen biosynthesis. Synthesizes alpha-1,4-glucan chains using ADP-glucose. The chain is Glycogen synthase 1 from Geobacter metallireducens (strain ATCC 53774 / DSM 7210 / GS-15).